The primary structure comprises 81 residues: RNA-binding protein Hfq (81 aa).

Residues 9–68 (DPFLNVLRRERVPVFIYLINGIKLQGEIESFDKFVILLRNTVNQMIYKHAISTIVPSRVV) enclose the Sm domain.

The protein belongs to the Hfq family. Homohexamer.

RNA chaperone that binds small regulatory RNA (sRNAs) and mRNAs to facilitate mRNA translational regulation in response to envelope stress, environmental stress and changes in metabolite concentrations. Also binds with high specificity to tRNAs. The chain is RNA-binding protein Hfq from Blochmanniella pennsylvanica (strain BPEN).